The primary structure comprises 295 residues: Small ribosomal subunit protein uS2 (295 aa).

Residue Ser2 is modified to N-acetylserine. Residue Ser43 is modified to Phosphoserine. Residue Lys52 is modified to N6-acetyllysine. Positions 54–113 are interaction with PPP1R16B; that stretch reads TWEKLLLAARAIVAIENPADVSVISSRNTGQRAVLKFAAATGATPIAGRFTPGTFTNQIQ. N6-acetyllysine; alternate is present on Lys89. Lys89 participates in a covalent cross-link: Glycyl lysine isopeptide (Lys-Gly) (interchain with G-Cter in SUMO2); alternate. The residue at position 97 (Thr97) is a Phosphothreonine. 2 laminin-binding regions span residues 161 to 180 and 205 to 229; these read IPCN…MLAR and RDPE…EFQG. 5 [DE]-W-[ST] repeats span residues 230–232, 247–249, 266–268, 275–277, and 293–295; these read EWT, DWS, and EWS. Residues 242–295 form a laminin-binding region; the sequence is QPEVADWSEGVQVPSVPIQQFPTEDWSAQPATEDWSAAPTAQATEWVGATTEWS. The segment at 266-295 is disordered; it reads DWSAQPATEDWSAAPTAQATEWVGATTEWS.

The protein belongs to the universal ribosomal protein uS2 family. In terms of assembly, monomer (37LRP) and homodimer (67LR). Component of the small ribosomal subunit. Mature ribosomes consist of a small (40S) and a large (60S) subunit. The 40S subunit contains about 33 different proteins and 1 molecule of RNA (18S). The 60S subunit contains about 49 different proteins and 3 molecules of RNA (28S, 5.8S and 5S). Interacts with RPS21. Interacts with several laminins including at least LAMB1. Interacts with MDK. Interacts with PRNP. The mature dimeric form interacts with PPP1R16B (via its fourth ankyrin repeat). Interacts with PPP1CA only in the presence of PPP1R16B. Acylated. Acylation may be a prerequisite for conversion of the monomeric 37 kDa laminin receptor precursor (37LRP) to the mature dimeric 67 kDa laminin receptor (67LR), and may provide a mechanism for membrane association. In terms of processing, cleaved by stromelysin-3 (ST3) at the cell surface. Cleavage by stromelysin-3 may be a mechanism to alter cell-extracellular matrix interactions.

The protein resides in the cell membrane. The protein localises to the cytoplasm. Its subcellular location is the nucleus. Functionally, required for the assembly and/or stability of the 40S ribosomal subunit. Required for the processing of the 20S rRNA-precursor to mature 18S rRNA in a late step of the maturation of 40S ribosomal subunits. Also functions as a cell surface receptor for laminin. Plays a role in cell adhesion to the basement membrane and in the consequent activation of signaling transduction pathways. May play a role in cell fate determination and tissue morphogenesis. Also acts as a receptor for several other ligands, including the pathogenic prion protein, viruses, and bacteria. Acts as a PPP1R16B-dependent substrate of PPP1CA. Enables malignant tumor cells to penetrate laminin tissue and vessel barriers. Activates precursor thymic anti-OFA/iLRP specific cytotoxic T-cell. May induce CD8 T-suppressor cells secreting IL-10. The chain is Small ribosomal subunit protein uS2 (Rpsa) from Mus musculus (Mouse).